A 107-amino-acid polypeptide reads, in one-letter code: Probable monothiol glutaredoxin 2 (107 aa).

Residues 7-107 (FKFIENEIKN…LEKMLKAYTR (101 aa)) form the Glutaredoxin domain. Lysine 24 is a glutathione binding site. Residue cysteine 32 participates in [2Fe-2S] cluster binding. Glutathione-binding positions include arginine 61, phenylalanine 73, and 86-87 (CD).

The protein belongs to the glutaredoxin family. Monothiol subfamily.

The chain is Probable monothiol glutaredoxin 2 (grxC2) from Rickettsia conorii (strain ATCC VR-613 / Malish 7).